We begin with the raw amino-acid sequence, 263 residues long: HTH-type transcriptional repressor NanR (263 aa).

The HTH gntR-type domain maps to 30–98 (KKLSEMVEEE…NGERARVSRP (69 aa)). Positions 58–77 (ERELMAFFNVGRPSVREALA) form a DNA-binding region, H-T-H motif.

This sequence belongs to the NanR family.

In terms of biological role, transcriptional repressor that controls expression of the genes required for the catabolism of sialic acids. The sequence is that of HTH-type transcriptional repressor NanR from Salmonella arizonae (strain ATCC BAA-731 / CDC346-86 / RSK2980).